We begin with the raw amino-acid sequence, 354 residues long: MASNKAMFTNDVPQDRLLAVEKIESLRKPAKVMIIGDVDTGKTTLTIYLANELLSRGFRVAIIDSDIGQKGILPPATISLAFVDSHFTSLDDLKAFSHYFIGTITPNQYFGEMVVGVMKLSELAMKFSDVVLIDTTGMIYGSGVELKRMKIEAVKPNLILALERNNELAPILKGYEDITIRLEVSEKAKDFSRSERRELRREKWRKYFENSKIVNFNLDDVLVTGTSLFQGEEIGDTEKSLLERLFKWLIIHGRKIGNKYFVVKVDASEGPRIVDKNVVKYFDFSKLSNILLGLIDKQGFCIGLGILKSINFKEKKIEVLTPVEDLSSVAEIRFGRVRVREDGEELGLLDREAL.

Gly-36 to Thr-43 provides a ligand contact to ATP.

A divalent metal cation is required as a cofactor.

The enzyme catalyses a 5'-end dephospho-2'-deoxyribonucleoside-DNA + ATP = a 5'-end 5'-phospho-2'-deoxyribonucleoside-DNA + ADP + H(+). The catalysed reaction is a 5'-end dephospho-ribonucleoside-RNA + ATP = a 5'-end 5'-phospho-ribonucleoside-RNA + ADP + H(+). In terms of biological role, polynucleotide kinase that can phosphorylate the 5'-hydroxyl groups of both single-stranded RNA (ssRNA) and single-stranded DNA (ssDNA). Exhibits a strong preference for ssRNA. This chain is Polyribonucleotide 5'-hydroxyl-kinase PYRAB01840, found in Pyrococcus abyssi (strain GE5 / Orsay).